The chain runs to 243 residues: Carboxy-S-adenosyl-L-methionine synthase (243 aa).

Residues Y35, G68 to S70, D92 to N93, and R199 contribute to the S-adenosyl-L-methionine site.

The protein belongs to the class I-like SAM-binding methyltransferase superfamily. Cx-SAM synthase family. As to quaternary structure, homodimer.

It catalyses the reaction prephenate + S-adenosyl-L-methionine = carboxy-S-adenosyl-L-methionine + 3-phenylpyruvate + H2O. Functionally, catalyzes the conversion of S-adenosyl-L-methionine (SAM) to carboxy-S-adenosyl-L-methionine (Cx-SAM). This chain is Carboxy-S-adenosyl-L-methionine synthase, found in Helicobacter pylori (strain P12).